Consider the following 75-residue polypeptide: uncharacterized protein (75 aa).

The protein belongs to the HSBP1 family.

This is an uncharacterized protein from Schizosaccharomyces pombe (strain 972 / ATCC 24843) (Fission yeast).